Reading from the N-terminus, the 551-residue chain is Glucans biosynthesis protein D (551 aa).

Residues 1–32 (MNRRRFIKGSMAMAAVCGSSGIASLFSQAAFA) constitute a signal peptide (tat-type signal).

Belongs to the OpgD/OpgG family. In terms of processing, predicted to be exported by the Tat system. The position of the signal peptide cleavage has not been experimentally proven.

The protein resides in the periplasm. It participates in glycan metabolism; osmoregulated periplasmic glucan (OPG) biosynthesis. In terms of biological role, probably involved in the control of the structural glucose backbone of osmoregulated periplasmic glucans (OPGs). The sequence is that of Glucans biosynthesis protein D from Salmonella paratyphi A (strain ATCC 9150 / SARB42).